The primary structure comprises 194 residues: MSNVLVLKSSISGNNSQTNQLADYVIEKLQGNNIVVRDLSQQPLPYFDTAAAIAVRGEPKTTEEKQLLALSDKLIEELKNAQTLIIGAPMYNLNVPTQLKSYFDFIARPRVTFQYTANGSEGLLKGKKAILLCAFGGLYDEENLVTQYMKSILGFIGITDVQFVYAQGIGFGPEAIEKAQASAKNKINEIVAAL.

Residues S10 and 90–93 (MYNL) contribute to the FMN site.

It belongs to the azoreductase type 1 family. In terms of assembly, homodimer. Requires FMN as cofactor.

It catalyses the reaction 2 a quinone + NADH + H(+) = 2 a 1,4-benzosemiquinone + NAD(+). The catalysed reaction is N,N-dimethyl-1,4-phenylenediamine + anthranilate + 2 NAD(+) = 2-(4-dimethylaminophenyl)diazenylbenzoate + 2 NADH + 2 H(+). Quinone reductase that provides resistance to thiol-specific stress caused by electrophilic quinones. Its function is as follows. Also exhibits azoreductase activity. Catalyzes the reductive cleavage of the azo bond in aromatic azo compounds to the corresponding amines. This Haemophilus influenzae (strain ATCC 51907 / DSM 11121 / KW20 / Rd) protein is FMN-dependent NADH:quinone oxidoreductase.